The primary structure comprises 104 residues: Ribonuclease P protein component 4 (104 aa).

4 residues coordinate Zn(2+): Cys57, Cys60, Cys83, and Cys86.

Belongs to the eukaryotic/archaeal RNase P protein component 4 family. As to quaternary structure, consists of a catalytic RNA component and at least 4-5 protein subunits. Zn(2+) serves as cofactor.

Its subcellular location is the cytoplasm. It catalyses the reaction Endonucleolytic cleavage of RNA, removing 5'-extranucleotides from tRNA precursor.. Part of ribonuclease P, a protein complex that generates mature tRNA molecules by cleaving their 5'-ends. The sequence is that of Ribonuclease P protein component 4 from Saccharolobus islandicus (strain M.14.25 / Kamchatka #1) (Sulfolobus islandicus).